The sequence spans 454 residues: Chromosomal replication initiator protein DnaA (454 aa).

A domain I, interacts with DnaA modulators region spans residues 1–74 (MFDLDKFWQF…IQEAYAYADM (74 aa)). A domain II region spans residues 74–116 (MEIQPKFEVAGKEGPERLVTPQPRIKTNQEILENRRDEFAQDL). The tract at residues 117–333 (QLNSKYTFDT…GALVKVQAHA (217 aa)) is domain III, AAA+ region. Positions 161, 163, 164, and 165 each coordinate ATP. Residues 334–454 (TIEREDINVD…VYDLKAMLEH (121 aa)) form a domain IV, binds dsDNA region.

It belongs to the DnaA family. As to quaternary structure, oligomerizes as a right-handed, spiral filament on DNA at oriC.

It is found in the cytoplasm. In terms of biological role, plays an essential role in the initiation and regulation of chromosomal replication. ATP-DnaA binds to the origin of replication (oriC) to initiate formation of the DNA replication initiation complex once per cell cycle. Binds the DnaA box (a 9 base pair repeat at the origin) and separates the double-stranded (ds)DNA. Forms a right-handed helical filament on oriC DNA; dsDNA binds to the exterior of the filament while single-stranded (ss)DNA is stabiized in the filament's interior. The ATP-DnaA-oriC complex binds and stabilizes one strand of the AT-rich DNA unwinding element (DUE), permitting loading of DNA polymerase. After initiation quickly degrades to an ADP-DnaA complex that is not apt for DNA replication. Binds acidic phospholipids. This Lactobacillus johnsonii (strain CNCM I-12250 / La1 / NCC 533) protein is Chromosomal replication initiator protein DnaA.